Here is a 285-residue protein sequence, read N- to C-terminus: UPF0703 protein YcgQ (285 aa).

A run of 4 helical transmembrane segments spans residues 4 to 24, 34 to 54, 89 to 109, and 210 to 230; these read LLVL…GNLT, LSFI…YLFI, LIYV…IATL, and FVLR…GMLV.

The protein belongs to the UPF0703 family.

The protein resides in the cell membrane. The polypeptide is UPF0703 protein YcgQ (ycgQ) (Bacillus subtilis (strain 168)).